The sequence spans 594 residues: Alanine--tRNA ligase (594 aa).

The Zn(2+) site is built by His456, His460, Cys558, and His562.

This sequence belongs to the class-II aminoacyl-tRNA synthetase family. Zn(2+) serves as cofactor.

The protein localises to the cytoplasm. The catalysed reaction is tRNA(Ala) + L-alanine + ATP = L-alanyl-tRNA(Ala) + AMP + diphosphate. Catalyzes the attachment of alanine to tRNA(Ala) in a two-step reaction: alanine is first activated by ATP to form Ala-AMP and then transferred to the acceptor end of tRNA(Ala). Also edits incorrectly charged Ser-tRNA(Ala) and Gly-tRNA(Ala) via its editing domain. The sequence is that of Alanine--tRNA ligase (alaS) from Borrelia garinii subsp. bavariensis (strain ATCC BAA-2496 / DSM 23469 / PBi) (Borreliella bavariensis).